The primary structure comprises 457 residues: Methylenetetrahydrofolate--tRNA-(uracil-5-)-methyltransferase TrmFO (457 aa).

7 to 12 contributes to the FAD binding site; it reads GAGLAG. Residues 38-58 are disordered; the sequence is FTSRQDEKTGTHDVRNATQTR. Positions 40 to 52 are enriched in basic and acidic residues; it reads SRQDEKTGTHDVR.

It belongs to the MnmG family. TrmFO subfamily. FAD is required as a cofactor.

Its subcellular location is the cytoplasm. The enzyme catalyses uridine(54) in tRNA + (6R)-5,10-methylene-5,6,7,8-tetrahydrofolate + NADH + H(+) = 5-methyluridine(54) in tRNA + (6S)-5,6,7,8-tetrahydrofolate + NAD(+). It carries out the reaction uridine(54) in tRNA + (6R)-5,10-methylene-5,6,7,8-tetrahydrofolate + NADPH + H(+) = 5-methyluridine(54) in tRNA + (6S)-5,6,7,8-tetrahydrofolate + NADP(+). Catalyzes the folate-dependent formation of 5-methyl-uridine at position 54 (M-5-U54) in all tRNAs. The sequence is that of Methylenetetrahydrofolate--tRNA-(uracil-5-)-methyltransferase TrmFO from Hydrogenobaculum sp. (strain Y04AAS1).